A 335-amino-acid chain; its full sequence is Tetraacyldisaccharide 4'-kinase (335 aa).

Residue Thr59–Thr66 coordinates ATP.

This sequence belongs to the LpxK family.

It catalyses the reaction a lipid A disaccharide + ATP = a lipid IVA + ADP + H(+). It participates in glycolipid biosynthesis; lipid IV(A) biosynthesis; lipid IV(A) from (3R)-3-hydroxytetradecanoyl-[acyl-carrier-protein] and UDP-N-acetyl-alpha-D-glucosamine: step 6/6. Functionally, transfers the gamma-phosphate of ATP to the 4'-position of a tetraacyldisaccharide 1-phosphate intermediate (termed DS-1-P) to form tetraacyldisaccharide 1,4'-bis-phosphate (lipid IVA). The sequence is that of Tetraacyldisaccharide 4'-kinase from Vibrio parahaemolyticus serotype O3:K6 (strain RIMD 2210633).